Consider the following 720-residue polypeptide: Putative fatty acid oxidation complex trifunctional enzyme (720 aa).

Residues 1 to 384 (MQNEIKKVCV…SWHYGPFELL (384 aa)) form a 3-hydroxyacyl-CoA dehydrogenase region. An enoyl-CoA hydratase/isomerase region spans residues 453–720 (FVITTKMNSL…TIEKLQAIVG (268 aa)).

It in the N-terminal section; belongs to the 3-hydroxyacyl-CoA dehydrogenase family. In the C-terminal section; belongs to the enoyl-CoA hydratase/isomerase family.

It catalyses the reaction a (3S)-3-hydroxyacyl-CoA + NAD(+) = a 3-oxoacyl-CoA + NADH + H(+). The catalysed reaction is a (3S)-3-hydroxyacyl-CoA = a (2E)-enoyl-CoA + H2O. The enzyme catalyses a 4-saturated-(3S)-3-hydroxyacyl-CoA = a (3E)-enoyl-CoA + H2O. It carries out the reaction a (3Z)-enoyl-CoA = a 4-saturated (2E)-enoyl-CoA. It catalyses the reaction a (3E)-enoyl-CoA = a 4-saturated (2E)-enoyl-CoA. In Rickettsia prowazekii (strain Madrid E), this protein is Putative fatty acid oxidation complex trifunctional enzyme.